A 179-amino-acid chain; its full sequence is Gut granule loss protein 3 (179 aa).

Residues 40 to 59 (DLDSASSGVGSSTCTEEQES) form a disordered region. The segment covering 42-54 (DSASSGVGSSTCT) has biased composition (polar residues).

The sequence is that of Gut granule loss protein 3 (glo-3) from Caenorhabditis elegans.